The primary structure comprises 110 residues: UPF0339 protein SO_3888 (110 aa).

2 tandem repeats follow at residues S10–K58 and A61–L109.

The protein belongs to the UPF0339 family. Duplicated subfamily.

In Shewanella oneidensis (strain ATCC 700550 / JCM 31522 / CIP 106686 / LMG 19005 / NCIMB 14063 / MR-1), this protein is UPF0339 protein SO_3888.